Here is an 80-residue protein sequence, read N- to C-terminus: Defensin-like protein 17 (80 aa).

The first 29 residues, 1 to 29, serve as a signal peptide directing secretion; sequence MAKSATIITFLFAALVLFAAFEAPTMVEA. Gln-30 is modified (pyrrolidone carboxylic acid). 4 disulfides stabilise this stretch: Cys-33-Cys-80, Cys-44-Cys-65, Cys-50-Cys-74, and Cys-54-Cys-76.

It belongs to the DEFL family.

It is found in the secreted. In terms of biological role, confers broad-spectrum resistance to pathogens. This chain is Defensin-like protein 17 (PDF1.2C), found in Arabidopsis thaliana (Mouse-ear cress).